We begin with the raw amino-acid sequence, 847 residues long: Ras GTPase-activating protein 2 (847 aa).

Residues 1 to 18 (MAAAAPAAAALTEAPAVP) show a composition bias toward low complexity. The interval 1–31 (MAAAAPAAAALTEAPAVPGTAEPETGDEDSR) is disordered. Residue Ala-2 is modified to N-acetylalanine. C2 domains are found at residues 19 to 137 (GTAE…ETWF) and 148 to 288 (VQGK…QAWY). One can recognise a Ras-GAP domain in the interval 371–588 (NKLVPFITAV…TDVKKFLDEI (218 aa)). A Phosphoserine modification is found at Ser-554. Positions 603-704 (VHLKEGEMYK…WIDMLCRVSR (102 aa)) constitute a PH domain. Residues 706-742 (NHNRLSSFHPSAYLNGNWLCCQETSEGTPGCKPCTAG) form a Btk-type zinc finger. Zn(2+) is bound by residues His-714, Cys-725, Cys-726, and Cys-736. A disordered region spans residues 819-847 (DEPHEKYRKKRSSSAKYGSKENPIVGKIS).

As to expression, widely expressed. Higher expression in brain, placenta, and kidney.

The protein localises to the cell membrane. In terms of biological role, inhibitory regulator of the Ras-cyclic AMP pathway. May bind inositol tetrakisphosphate (IP4) and phospholipids. In Rattus norvegicus (Rat), this protein is Ras GTPase-activating protein 2 (Rasa2).